The sequence spans 242 residues: MTLVYPRRQRQLESLVRKLGLPITAPIKWELLDLALTHPTVSESANYEQLEFVGDAVVRLAAAVMLWETYPDCPVGDFAAIRSVLVSDRILAQLAREYGLELHLLVAGSATSDKIGQESRLADAFEAVLGALYLSTSNLELIRPWLDHHFRQLAAEIRLDPARLNYKAALQEWTQAQFKVLPEYRVVEINQANRTQERFAAEVWLHGNKLGEGKGRSIKAAEQAAAKVAFLAITPPEEIANQ.

The region spanning 12–137 is the RNase III domain; that stretch reads LESLVRKLGL…VLGALYLSTS (126 aa). Glutamate 51 contributes to the Mg(2+) binding site. Aspartate 55 is an active-site residue. Mg(2+) is bound by residues aspartate 123 and glutamate 126. Glutamate 126 is an active-site residue. Residues 165–235 enclose the DRBM domain; it reads NYKAALQEWT…AKVAFLAITP (71 aa).

This sequence belongs to the ribonuclease III family. Homodimer. Mg(2+) is required as a cofactor.

The protein localises to the cytoplasm. The catalysed reaction is Endonucleolytic cleavage to 5'-phosphomonoester.. In terms of biological role, digests double-stranded RNA. Involved in the processing of primary rRNA transcript to yield the immediate precursors to the large and small rRNAs (23S and 16S). Processes some mRNAs, and tRNAs when they are encoded in the rRNA operon. Processes pre-crRNA and tracrRNA of type II CRISPR loci if present in the organism. This Nostoc sp. (strain PCC 7120 / SAG 25.82 / UTEX 2576) protein is Ribonuclease 3 2 (rnc2).